A 389-amino-acid polypeptide reads, in one-letter code: Probable peptidoglycan glycosyltransferase FtsW (389 aa).

The Cytoplasmic portion of the chain corresponds to 1–14 (MPIRDWRQQSQRWP). Residues 15–35 (IDYWLIGALAILITLGLTMVA) traverse the membrane as a helical segment. The Periplasmic portion of the chain corresponds to 36-57 (SSSIAISEKRFGDPTHYLLRQM). A helical transmembrane segment spans residues 58–78 (FSMGLGLMAAYIVLKIPLSFW). The Cytoplasmic portion of the chain corresponds to 79 to 84 (RKHRGQ). Residues 85–105 (LFIVGLVLLVLVLVFGREING) form a helical membrane-spanning segment. Residues 106–111 (SKRWLP) lie on the Periplasmic side of the membrane. A helical transmembrane segment spans residues 112–132 (LVLMNFQVSEFMKIAVVVFMA). Over 133-144 (GYLDRHATAVRE) the chain is Cytoplasmic. The helical transmembrane segment at 145–165 (SFEAVIRLALPFGVMAILLLL) threads the bilayer. Over 166–168 (EPD) the chain is Periplasmic. The chain crosses the membrane as a helical span at residues 169 to 189 (FGSTFVIAVIITGMLLIAGAP). Over 190 to 191 (WR) the chain is Cytoplasmic. The chain crosses the membrane as a helical span at residues 192–212 (FFVMTVLPIATLLVMMVITSP). Over 213–268 (YRMARVTNFLDPWSDPFGNGYQLTQALIASGRGEWFGVGIGESVQKLLYLPDAHTD) the chain is Periplasmic. Residues 269 to 289 (FLFSIYAEEYGLIGVAFLALL) traverse the membrane as a helical segment. At 290–310 (YLTLLYRCFRIGRKAFNQTHY) the chain is on the cytoplasmic side. The chain crosses the membrane as a helical span at residues 311 to 331 (FGGLIAYGVGIWIVLQAMINM). Over 332–344 (GVNLGLFPTKGLT) the chain is Periplasmic. The helical transmembrane segment at 345–365 (LPFMSYGGSSVLMLFIGVAMV) threads the bilayer. At 366–389 (LRVDLETRQAVLEHSVDESGQGKR) the chain is on the cytoplasmic side.

This sequence belongs to the SEDS family. FtsW subfamily.

The protein localises to the cell inner membrane. The catalysed reaction is [GlcNAc-(1-&gt;4)-Mur2Ac(oyl-L-Ala-gamma-D-Glu-L-Lys-D-Ala-D-Ala)](n)-di-trans,octa-cis-undecaprenyl diphosphate + beta-D-GlcNAc-(1-&gt;4)-Mur2Ac(oyl-L-Ala-gamma-D-Glu-L-Lys-D-Ala-D-Ala)-di-trans,octa-cis-undecaprenyl diphosphate = [GlcNAc-(1-&gt;4)-Mur2Ac(oyl-L-Ala-gamma-D-Glu-L-Lys-D-Ala-D-Ala)](n+1)-di-trans,octa-cis-undecaprenyl diphosphate + di-trans,octa-cis-undecaprenyl diphosphate + H(+). Its pathway is cell wall biogenesis; peptidoglycan biosynthesis. In terms of biological role, peptidoglycan polymerase that is essential for cell division. This chain is Probable peptidoglycan glycosyltransferase FtsW, found in Hydrogenovibrio crunogenus (strain DSM 25203 / XCL-2) (Thiomicrospira crunogena).